We begin with the raw amino-acid sequence, 205 residues long: Small ribosomal subunit protein uS4 (205 aa).

The segment at 19-45 (IWGRPKSPVNRREYGPGQHGQRRKGKL) is disordered. Positions 94-157 (SRLDAVVYRA…KQLAIVLEAV (64 aa)) constitute an S4 RNA-binding domain.

The protein belongs to the universal ribosomal protein uS4 family. As to quaternary structure, part of the 30S ribosomal subunit. Contacts protein S5. The interaction surface between S4 and S5 is involved in control of translational fidelity.

Its function is as follows. One of the primary rRNA binding proteins, it binds directly to 16S rRNA where it nucleates assembly of the body of the 30S subunit. In terms of biological role, with S5 and S12 plays an important role in translational accuracy. The protein is Small ribosomal subunit protein uS4 of Brucella suis biovar 1 (strain 1330).